An 89-amino-acid polypeptide reads, in one-letter code: Small ribosomal subunit protein uS15 (89 aa).

The protein belongs to the universal ribosomal protein uS15 family. Part of the 30S ribosomal subunit. Forms a bridge to the 50S subunit in the 70S ribosome, contacting the 23S rRNA.

Functionally, one of the primary rRNA binding proteins, it binds directly to 16S rRNA where it helps nucleate assembly of the platform of the 30S subunit by binding and bridging several RNA helices of the 16S rRNA. In terms of biological role, forms an intersubunit bridge (bridge B4) with the 23S rRNA of the 50S subunit in the ribosome. The polypeptide is Small ribosomal subunit protein uS15 (Anaeromyxobacter dehalogenans (strain 2CP-1 / ATCC BAA-258)).